The chain runs to 426 residues: Glutamate-1-semialdehyde 2,1-aminomutase (426 aa).

Lys-265 bears the N6-(pyridoxal phosphate)lysine mark.

This sequence belongs to the class-III pyridoxal-phosphate-dependent aminotransferase family. HemL subfamily. In terms of assembly, homodimer. Requires pyridoxal 5'-phosphate as cofactor.

The protein localises to the cytoplasm. The catalysed reaction is (S)-4-amino-5-oxopentanoate = 5-aminolevulinate. The protein operates within porphyrin-containing compound metabolism; protoporphyrin-IX biosynthesis; 5-aminolevulinate from L-glutamyl-tRNA(Glu): step 2/2. This chain is Glutamate-1-semialdehyde 2,1-aminomutase, found in Alteromonas mediterranea (strain DSM 17117 / CIP 110805 / LMG 28347 / Deep ecotype).